A 288-amino-acid polypeptide reads, in one-letter code: B3 domain-containing protein At2g35310 (288 aa).

DNA-binding regions (TF-B3) lie at residues 19-114 and 196-288; these read FFKV…FMQD and AEFS…VSKP.

The protein localises to the nucleus. The polypeptide is B3 domain-containing protein At2g35310 (Arabidopsis thaliana (Mouse-ear cress)).